The sequence spans 402 residues: Tryptophan synthase beta chain (402 aa).

Position 92 is an N6-(pyridoxal phosphate)lysine (Lys92).

It belongs to the TrpB family. In terms of assembly, tetramer of two alpha and two beta chains. It depends on pyridoxal 5'-phosphate as a cofactor.

The catalysed reaction is (1S,2R)-1-C-(indol-3-yl)glycerol 3-phosphate + L-serine = D-glyceraldehyde 3-phosphate + L-tryptophan + H2O. It participates in amino-acid biosynthesis; L-tryptophan biosynthesis; L-tryptophan from chorismate: step 5/5. The beta subunit is responsible for the synthesis of L-tryptophan from indole and L-serine. The sequence is that of Tryptophan synthase beta chain from Staphylococcus epidermidis (strain ATCC 35984 / DSM 28319 / BCRC 17069 / CCUG 31568 / BM 3577 / RP62A).